Reading from the N-terminus, the 92-residue chain is Small archaeal modifier protein 3 (92 aa).

Glycyl lysine isopeptide (Lys-Gly) (interchain with G-Cter in SAMP3) cross-links involve residues lysine 18, lysine 55, and lysine 62. Glycine 92 bears the Glycyl adenylate; alternate mark. A Glycyl lysine isopeptide (Gly-Lys) (interchain with K-? in acceptor proteins); alternate cross-link involves residue glycine 92.

In terms of assembly, monomer. Post-translationally, the C-terminal glycine is likely acyl-adenylated (-COAMP) by UbaA.

Functionally, functions as a protein modifier covalently attached to lysine residues of substrate proteins. The protein modification process is termed sampylation and involves the formation of an isopeptide bond between the SAMP3 C-terminal glycine carboxylate and the epsilon-amino group of lysine residues on target proteins. Seems to be able to form polymeric chains with itself at Lys-18, Lys-55 and Lys-62, similar to ubiquitin and other ubiquitin-like proteins. SAMP3 appears not to serve as a proteolytic signal in the cell to target proteins for degradation by proteasomes. May regulate molybdenum cofactor (MoCo) biosynthesis by inhibiting the activity of MPT synthase MoaE under aerobic conditions, providing a hierarchy of oxygen use prior to that of alternative electron acceptors such as DMSO. The protein is Small archaeal modifier protein 3 (samp3) of Haloferax volcanii (strain ATCC 29605 / DSM 3757 / JCM 8879 / NBRC 14742 / NCIMB 2012 / VKM B-1768 / DS2) (Halobacterium volcanii).